Reading from the N-terminus, the 280-residue chain is Ribosomal RNA small subunit methyltransferase A (280 aa).

S-adenosyl-L-methionine-binding residues include histidine 13, leucine 15, glycine 40, glutamate 61, aspartate 85, and asparagine 106. Residues 258 to 280 are disordered; it reads RPPADVEDANAPHTEQGKGDNSQ.

Belongs to the class I-like SAM-binding methyltransferase superfamily. rRNA adenine N(6)-methyltransferase family. RsmA subfamily.

The protein localises to the cytoplasm. It carries out the reaction adenosine(1518)/adenosine(1519) in 16S rRNA + 4 S-adenosyl-L-methionine = N(6)-dimethyladenosine(1518)/N(6)-dimethyladenosine(1519) in 16S rRNA + 4 S-adenosyl-L-homocysteine + 4 H(+). In terms of biological role, specifically dimethylates two adjacent adenosines (A1518 and A1519) in the loop of a conserved hairpin near the 3'-end of 16S rRNA in the 30S particle. May play a critical role in biogenesis of 30S subunits. This chain is Ribosomal RNA small subunit methyltransferase A, found in Alcanivorax borkumensis (strain ATCC 700651 / DSM 11573 / NCIMB 13689 / SK2).